A 121-amino-acid chain; its full sequence is Basic phospholipase A2 homolog zhaoermiatoxin (121 aa).

7 disulfides stabilise this stretch: cysteine 26–cysteine 115, cysteine 28–cysteine 44, cysteine 43–cysteine 95, cysteine 49–cysteine 121, cysteine 50–cysteine 88, cysteine 57–cysteine 81, and cysteine 75–cysteine 86.

Belongs to the phospholipase A2 family. Group II subfamily. R49 sub-subfamily. In terms of assembly, homodimer. Expressed by the venom gland.

It is found in the secreted. Functionally, snake venom phospholipase A2 homolog that induces myonecrosis, and edema. Has low myotoxic activity. This Protobothrops mangshanensis (Mangshan pitviper) protein is Basic phospholipase A2 homolog zhaoermiatoxin.